Reading from the N-terminus, the 68-residue chain is Protease A inhibitor 3 (68 aa).

Methionine 1 is subject to N-acetylmethionine. Positions methionine 1–serine 14 are enriched in polar residues. Disordered regions lie at residues methionine 1 to glycine 21 and methionine 33 to glutamate 68. The segment at methionine 1–lysine 32 is inhibitory domain. A compositionally biased stretch (basic and acidic residues) spans methionine 33 to tyrosine 53.

Belongs to the protease inhibitor I34 family.

Functionally, specific and potent inhibitor for yeast aspartic protease A (yscA). The proteinase acts as a folding template stabilizing the helical conformation in the inhibitor, which results in the potent and specific blockage of the proteolytic activity. This chain is Protease A inhibitor 3 (PAI3), found in Saccharomyces cerevisiae (strain ATCC 204508 / S288c) (Baker's yeast).